Here is a 228-residue protein sequence, read N- to C-terminus: Protein-L-isoaspartate O-methyltransferase (228 aa).

The interval 1-20 (MVAVSLKMSQPAAPPPPMGE) is disordered. The active site involves S76.

It belongs to the methyltransferase superfamily. L-isoaspartyl/D-aspartyl protein methyltransferase family.

It is found in the cytoplasm. It carries out the reaction [protein]-L-isoaspartate + S-adenosyl-L-methionine = [protein]-L-isoaspartate alpha-methyl ester + S-adenosyl-L-homocysteine. Functionally, catalyzes the methyl esterification of L-isoaspartyl residues in peptides and proteins that result from spontaneous decomposition of normal L-aspartyl and L-asparaginyl residues. It plays a role in the repair and/or degradation of damaged proteins. The sequence is that of Protein-L-isoaspartate O-methyltransferase from Magnetococcus marinus (strain ATCC BAA-1437 / JCM 17883 / MC-1).